Reading from the N-terminus, the 57-residue chain is uncharacterized protein (57 aa).

This is an uncharacterized protein from Thermoproteus tenax virus 1 (strain KRA1) (TTV1).